The chain runs to 324 residues: Large ribosomal subunit protein uL3m (324 aa).

A mitochondrion-targeting transit peptide spans 1–41 (MAAVPRGLLSRINQFLSIRSITPSSSESLPHCSSFFLIRRF). Residues 206–229 (PASHGASLSHRSGGSTGQRDAPGK) are disordered.

The protein belongs to the universal ribosomal protein uL3 family. In terms of assembly, part of the 50S ribosomal subunit.

It localises to the mitochondrion. Functionally, one of the primary rRNA binding proteins, it binds directly near the 3'-end of the 23S rRNA, where it nucleates assembly of the 50S subunit. This Arabidopsis thaliana (Mouse-ear cress) protein is Large ribosomal subunit protein uL3m.